Consider the following 124-residue polypeptide: Small ribosomal subunit protein uS12 (124 aa).

Aspartate 89 is subject to 3-methylthioaspartic acid.

Belongs to the universal ribosomal protein uS12 family. As to quaternary structure, part of the 30S ribosomal subunit. Contacts proteins S8 and S17. May interact with IF1 in the 30S initiation complex.

Functionally, with S4 and S5 plays an important role in translational accuracy. Interacts with and stabilizes bases of the 16S rRNA that are involved in tRNA selection in the A site and with the mRNA backbone. Located at the interface of the 30S and 50S subunits, it traverses the body of the 30S subunit contacting proteins on the other side and probably holding the rRNA structure together. The combined cluster of proteins S8, S12 and S17 appears to hold together the shoulder and platform of the 30S subunit. This Serratia proteamaculans (strain 568) protein is Small ribosomal subunit protein uS12.